We begin with the raw amino-acid sequence, 315 residues long: Neuroguidin (315 aa).

At A2 the chain carries N-acetylalanine. The stretch at 7–41 (LESDVSSSITLLKNLQEQVMAVTAQIQALTTKVRA) forms a coiled coil. Positions 41–174 (AGTYSTEKGL…KGSAKKYVPP (134 aa)) are necessary for interaction with EIF4E. Phosphoserine is present on residues S121, S142, and S143. The interval 123–190 (SENDPLRFKP…YDETEAEREQ (68 aa)) is disordered. Over residues 144–155 (EDEEESEAEEGQ) the composition is skewed to acidic residues. The span at 180–190 (HYDETEAEREQ) shows a compositional bias: basic and acidic residues. The stretch at 181 to 203 (YDETEAEREQKRLEKAKRRALSS) forms a coiled coil. S204 and S214 each carry phosphoserine. Basic and acidic residues-rich tracts occupy residues 212 to 225 (QYSDAPEEIRDARH) and 232 to 241 (SQEDQHRVNY). 2 disordered regions span residues 212 to 243 (QYSDAPEEIRDARHPHVTRQSQEDQHRVNYEE) and 284 to 315 (GTAHLDEDQNPVKKRKKLPKKGRKKKGFRRRW). Positions 295–315 (VKKRKKLPKKGRKKKGFRRRW) are enriched in basic residues.

This sequence belongs to the SAS10 family. Interacts with CPEB1 and EIF4E. As to expression, expressed in testis, ovary, spleen, kidney, hippocampus and cerebellum (at protein level). Expressed in testis, ovary, spleen, kidney, brain.

It is found in the nucleus. Its subcellular location is the nucleolus. The protein localises to the chromosome. The protein resides in the centromere. It localises to the cytoplasm. It is found in the cell projection. Its subcellular location is the axon. The protein localises to the dendrite. The protein resides in the filopodium. Functionally, part of the small subunit (SSU) processome, first precursor of the small eukaryotic ribosomal subunit. During the assembly of the SSU processome in the nucleolus, many ribosome biogenesis factors, an RNA chaperone and ribosomal proteins associate with the nascent pre-rRNA and work in concert to generate RNA folding, modifications, rearrangements and cleavage as well as targeted degradation of pre-ribosomal RNA by the RNA exosome. Its dissociation from the complex determines the transition from state pre-A1 to state pre-A1*. Inhibits mRNA translation in a cytoplasmic polyadenylation element (CPE)-dependent manner. The chain is Neuroguidin (Ngdn) from Mus musculus (Mouse).